A 78-amino-acid polypeptide reads, in one-letter code: Large ribosomal subunit protein bL28 (78 aa).

The segment at 1–25 (MSRVCQVTGKRPAVGNNRSHAKNAT) is disordered.

The protein belongs to the bacterial ribosomal protein bL28 family.

This Aliivibrio fischeri (strain ATCC 700601 / ES114) (Vibrio fischeri) protein is Large ribosomal subunit protein bL28.